Consider the following 235-residue polypeptide: Probable inactive serine protease 37 (235 aa).

An N-terminal signal peptide occupies residues 1–19 (MKYVFYLGVLAGTFFFADS). Positions 20-233 (SVQKEDPAPY…YVSWIENTAK (214 aa)) constitute a Peptidase S1 domain. 3 cysteine pairs are disulfide-bonded: Cys40/Cys56, Cys131/Cys198, and Cys163/Cys177.

It belongs to the peptidase S1 family. In terms of tissue distribution, testis-specific. Expressed in spermatids (at protein level).

It is found in the cytoplasmic vesicle. The protein localises to the secretory vesicle. Its subcellular location is the acrosome. The protein resides in the secreted. Its function is as follows. Plays a role in male fertility. May have a role in sperm migration or binding to zona-intact eggs. Involved in the activation of the proacrosin/acrosin system. The sequence is that of Probable inactive serine protease 37 from Homo sapiens (Human).